A 221-amino-acid chain; its full sequence is Lipoprotein-releasing system ATP-binding protein LolD (221 aa).

The 215-residue stretch at 6 to 220 (LILKNISKHY…YKLKHRLLNI (215 aa)) folds into the ABC transporter domain. 42–49 (GSSGSGKS) is a binding site for ATP.

It belongs to the ABC transporter superfamily. Lipoprotein translocase (TC 3.A.1.125) family. In terms of assembly, the complex is composed of two ATP-binding proteins (LolD) and two transmembrane proteins (LolC and LolE).

The protein resides in the cell inner membrane. Part of the ABC transporter complex LolCDE involved in the translocation of mature outer membrane-directed lipoproteins, from the inner membrane to the periplasmic chaperone, LolA. Responsible for the formation of the LolA-lipoprotein complex in an ATP-dependent manner. This is Lipoprotein-releasing system ATP-binding protein LolD from Rickettsia conorii (strain ATCC VR-613 / Malish 7).